The chain runs to 471 residues: Tripartite motif-containing protein 60 (471 aa).

An RING-type zinc finger spans residues 16–57 (CPICLEYLKDPVTINCGHNFCRSCLSVSWKDLDDTFPCPVCR). A B box-type zinc finger spans residues 92 to 133 (KENAMCEKHNQFLTLFCVKDLEILCTQCSFSTKHQKHYICPI). The Zn(2+) site is built by C97, H100, C119, and H125. A coiled-coil region spans residues 171 to 223 (ELKKKVEYKREEINSEFEQIRLFLQNEQEMILRQIQDEEMNILAKLNENLVEL). Positions 277-470 (FSLPPQYSGL…LKICSVSDSE (194 aa)) constitute a B30.2/SPRY domain.

Belongs to the TRIM/RBCC family.

Functionally, E3 SUMO-protein ligase that mediates SUMOylation of TAB2 leading to inhibition of NF-kappa-B and MAPK pathways by suppressing the TRAF6/TAB2/TAK1 complex. The chain is Tripartite motif-containing protein 60 (TRIM60) from Homo sapiens (Human).